The chain runs to 201 residues: Ras-related protein Rab-1C (201 aa).

Positions 1 to 20 (MGCSPSKEGNGSFSSTSTSF) are disordered. Gly-2 is lipidated: N-myristoyl glycine. Cys-3 carries S-palmitoyl cysteine lipidation. Residues 40–48 (GDSGVGKSC), 58–65 (FTDSYIST), 88–92 (DTAGQ), 146–149 (NKCD), and 176–178 (SAK) each bind GTP. The short motif at 62–70 (YISTIGVDF) is the Effector region element.

This sequence belongs to the small GTPase superfamily. Rab family. In terms of processing, although this sequence lacks the C-terminal cysteine motifs subject to isoprenylation in other Rab proteins, it does have N-terminal myristoylation and S-palmitoylation sequence motifs.

The sequence is that of Ras-related protein Rab-1C (Rab1C) from Dictyostelium discoideum (Social amoeba).